Reading from the N-terminus, the 182-residue chain is Large ribosomal subunit protein uL10 (182 aa).

This sequence belongs to the universal ribosomal protein uL10 family. Part of the ribosomal stalk of the 50S ribosomal subunit. The N-terminus interacts with L11 and the large rRNA to form the base of the stalk. The C-terminus forms an elongated spine to which L12 dimers bind in a sequential fashion forming a multimeric L10(L12)X complex.

Its function is as follows. Forms part of the ribosomal stalk, playing a central role in the interaction of the ribosome with GTP-bound translation factors. The chain is Large ribosomal subunit protein uL10 from Koribacter versatilis (strain Ellin345).